The chain runs to 401 residues: Acetate kinase (401 aa).

Residue asparagine 9 participates in Mg(2+) binding. Residue lysine 16 coordinates ATP. Arginine 88 contacts substrate. Aspartate 147 acts as the Proton donor/acceptor in catalysis. ATP is bound by residues histidine 207–glycine 211, aspartate 282–arginine 284, and glycine 333–asparagine 337. Residue glutamate 388 participates in Mg(2+) binding.

Belongs to the acetokinase family. As to quaternary structure, homodimer. Mg(2+) serves as cofactor. It depends on Mn(2+) as a cofactor.

It is found in the cytoplasm. The enzyme catalyses acetate + ATP = acetyl phosphate + ADP. It functions in the pathway metabolic intermediate biosynthesis; acetyl-CoA biosynthesis; acetyl-CoA from acetate: step 1/2. In terms of biological role, catalyzes the formation of acetyl phosphate from acetate and ATP. Can also catalyze the reverse reaction. In Haemophilus influenzae (strain PittEE), this protein is Acetate kinase.